Here is a 130-residue protein sequence, read N- to C-terminus: Small ribosomal subunit protein uS8 (130 aa).

This sequence belongs to the universal ribosomal protein uS8 family. In terms of assembly, part of the 30S ribosomal subunit.

In terms of biological role, one of the primary rRNA binding proteins, it binds directly to 16S rRNA central domain where it helps coordinate assembly of the platform of the 30S subunit. The chain is Small ribosomal subunit protein uS8 from Methanoculleus marisnigri (strain ATCC 35101 / DSM 1498 / JR1).